We begin with the raw amino-acid sequence, 587 residues long: Glutamine--tRNA ligase (587 aa).

A 'HIGH' region motif is present at residues P58–H68. Residues E59–N61 and H65–S71 each bind ATP. L-glutamine contacts are provided by D91 and Y240. ATP-binding positions include T259 and R294 to L295. Positions V301–R305 match the 'KMSKS' region motif.

It belongs to the class-I aminoacyl-tRNA synthetase family. Monomer.

It localises to the cytoplasm. It catalyses the reaction tRNA(Gln) + L-glutamine + ATP = L-glutaminyl-tRNA(Gln) + AMP + diphosphate. The chain is Glutamine--tRNA ligase from Bordetella parapertussis (strain 12822 / ATCC BAA-587 / NCTC 13253).